The primary structure comprises 280 residues: tRNA pseudouridine synthase A (280 aa).

The active-site Nucleophile is the Asp60. Position 119 (Tyr119) interacts with substrate.

The protein belongs to the tRNA pseudouridine synthase TruA family. As to quaternary structure, homodimer.

The enzyme catalyses uridine(38/39/40) in tRNA = pseudouridine(38/39/40) in tRNA. Formation of pseudouridine at positions 38, 39 and 40 in the anticodon stem and loop of transfer RNAs. This is tRNA pseudouridine synthase A from Treponema pallidum (strain Nichols).